The chain runs to 169 residues: Ribosome maturation factor RimM (169 aa).

Residues 94-168 (DDEFYHADLI…RIVADPPEGL (75 aa)) enclose the PRC barrel domain.

This sequence belongs to the RimM family. Binds ribosomal protein uS19.

The protein resides in the cytoplasm. Functionally, an accessory protein needed during the final step in the assembly of 30S ribosomal subunit, possibly for assembly of the head region. Essential for efficient processing of 16S rRNA. May be needed both before and after RbfA during the maturation of 16S rRNA. It has affinity for free ribosomal 30S subunits but not for 70S ribosomes. The protein is Ribosome maturation factor RimM of Cereibacter sphaeroides (strain ATCC 17025 / ATH 2.4.3) (Rhodobacter sphaeroides).